The sequence spans 1285 residues: MQEAARRASLRKEHTPTNEKFGDLSKQDSLGERASSKLTLDDELYDILYAFGETDAFINKGDKQRETDEDGNPLTRQALLERIRQKKEVIGKLRCQAWSMTRKRRTLKLAQKYLEQHESKVSRSHLYMEEMRKRARLMKRSFSNFKTYLIPWESKIKRIESHFGSVVSSYFTFLRWIVFVNIMITLIALVFVVLPETLADSVANEGRFNRTKTRKQIPANERVHADELAVVWHYDGYLRYSPLFYGYYSDDPFLGNKIKYALPLAYFMVTLTIFAYSFFAILRKMAANARMSKLSGSKAEQYIFNWKLFTGWDYTIGNSETASNTVMAVVIKLRESIADIKKDAHGKFRLLQFSLRVFANIIICAMLGFSIYCIIFAVQKSQVQDDGNLFTKNQVPSVVSTITHVFPMIFDLIGKMENYHPRTALRAHLGRVLILYTVNYITLIFALFEKMTALRDRVNSTSTSSSHRTKRQQGGWNPNMQRPPPYASRAEVRQMSDFLAANTRRFQTVSQRTTRSVTTPFTVAPQFGPFNVNNPNAVFHNGTHSTSFESQILGPKALPIFTPPPRKYPGFTPGNVGQQFGGPDFPRNQVYTKSTPLPRVRTKPPWVYTTTHPPLVQNRAMTTTMSKSAKKGNSKNLDDDILLSNETIQMSEAALRRNHDGHNNDICWETIIGQEIVKLVTMDLIFTILSILVIDLFRGLWIKYCSSWWCWDIETTFPEYGEFKVAENVLHIINNQGMIWLGLFFAPLLPAINNIKLIILMYIRGWAVMTCNVPAREIFRASRSSNFYLGILLIWLLLCTLPVGFVIASMSPSRSCGPFARYQHFYTVVTREIEKRVDQTVLSYIRHIASPGVVIPIILFLILIIYFLFSLVRGLREANTDLQAQLVHERTEEKKKIFELAGGKKNKFEKDRDKKRSNDYIPLIEQRRREPWRQYHEMEADHALASDSSEESDINEDEDDERQPLTAYPLRAIETPPETLQVTAFHPSLGSLIENREMEDEESASGDQLPMIHKSVSFQGPSHMQMRQSISTESCSQISRSAIQVATPEEIRALLRPYLEAKYGIPYQHGIKSFPIDVHTPPNNTPSRRSSKYNSFVSLYEHTRDDHKNFVASTIKETDEDPGKSDKKQTSSKDVAPDFMPWPSADEARALREKMKSKTPLMLTKTTVEEKPKGGKSSESEFRPPVPIHRKYNIQTTEEENEEEETDSAPESSKKRFRISVSPTKTIAPASASRAQHKIVSQASSSSSIPHGRQPDPNKKASLVLPPLRAPRVQFDEDDSPRQID.

A disordered region spans residues 1-29 (MQEAARRASLRKEHTPTNEKFGDLSKQDS). Over 1-164 (MQEAARRASL…KIKRIESHFG (164 aa)) the chain is Cytoplasmic. The chain crosses the membrane as a helical span at residues 165 to 202 (SVVSSYFTFLRWIVFVNIMITLIALVFVVLPETLADSV). Topologically, residues 203–260 (ANEGRFNRTKTRKQIPANERVHADELAVVWHYDGYLRYSPLFYGYYSDDPFLGNKIKY) are extracellular. Asn209 carries an N-linked (GalNAc...) asparagine glycan. A helical transmembrane segment spans residues 261-292 (ALPLAYFMVTLTIFAYSFFAILRKMAANARMS). Topologically, residues 293–349 (KLSGSKAEQYIFNWKLFTGWDYTIGNSETASNTVMAVVIKLRESIADIKKDAHGKFR) are cytoplasmic. Residues 350–381 (LLQFSLRVFANIIICAMLGFSIYCIIFAVQKS) form a helical membrane-spanning segment. Topologically, residues 382–388 (QVQDDGN) are extracellular. A helical membrane pass occupies residues 389–416 (LFTKNQVPSVVSTITHVFPMIFDLIGKM). The Cytoplasmic segment spans residues 417–420 (ENYH). A helical membrane pass occupies residues 421 to 455 (PRTALRAHLGRVLILYTVNYITLIFALFEKMTALR). At 456–667 (DRVNSTSTSS…NHDGHNNDIC (212 aa)) the chain is on the extracellular side. The disordered stretch occupies residues 458–488 (VNSTSTSSSHRTKRQQGGWNPNMQRPPPYAS). An intrachain disulfide couples Cys667 to Cys816. The helical transmembrane segment at 668-705 (WETIIGQEIVKLVTMDLIFTILSILVIDLFRGLWIKYC) threads the bilayer. The required for interaction with tmie stretch occupies residues 696–720 (LFRGLWIKYCSSWWCWDIETTFPEY). Over 706 to 724 (SSWWCWDIETTFPEYGEFK) the chain is Cytoplasmic. A helical transmembrane segment spans residues 725 to 745 (VAENVLHIINNQGMIWLGLFF). Residues 746-748 (APL) are Extracellular-facing. The helical transmembrane segment at 749 to 771 (LPAINNIKLIILMYIRGWAVMTC) threads the bilayer. A required for interaction with tmie region spans residues 766–773 (WAVMTCNV). Topologically, residues 772-785 (NVPAREIFRASRSS) are cytoplasmic. Residues 786-809 (NFYLGILLIWLLLCTLPVGFVIAS) traverse the membrane as a helical segment. The Extracellular portion of the chain corresponds to 810-852 (MSPSRSCGPFARYQHFYTVVTREIEKRVDQTVLSYIRHIASPG). The helical transmembrane segment at 853–886 (VVIPIILFLILIIYFLFSLVRGLREANTDLQAQL) threads the bilayer. Over 887 to 1285 (VHERTEEKKK…DEDDSPRQID (399 aa)) the chain is Cytoplasmic. Disordered regions lie at residues 940–962 (ADHA…DDER) and 1114–1285 (TIKE…RQID). Positions 948-961 (SSEESDINEDEDDE) are enriched in acidic residues. Basic and acidic residues-rich tracts occupy residues 1121-1131 (DPGKSDKKQTS), 1146-1156 (DEARALREKMK), and 1167-1182 (TVEE…ESEF). Acidic residues predominate over residues 1197 to 1208 (TEEENEEEETDS).

It belongs to the TMC family. In terms of assembly, homodimer. Interacts with calm-1 and tmie to form the MET channel. In terms of tissue distribution, expressed in the ASH polymodal avoidance neurons. Also expressed in other sensory neurons, including the ADF, ASE, ADL, AQR, PQR, URX and PHA cells.

It is found in the cell membrane. It carries out the reaction Na(+)(in) = Na(+)(out). The enzyme catalyses Ca(2+)(in) = Ca(2+)(out). The catalysed reaction is K(+)(in) = K(+)(out). In terms of biological role, pore-forming subunit of the mechanotransducer (MET) non-selective cation channel complex. The MET complex is composed of symmetric dimeric MET channels, each channel comprising two copies of pore-forming ion-conducting transmembrane TMC subunits and auxiliary proteins including the transmembrane inner ear protein/tmie, the calcium-binding protein/calm-1 and arrestin domain protein arrd-6. Sodium ions are the most permeable, whereas calcium and potassium have lower indices. Sodium-sensor ion channel that acts specifically in salt taste chemosensation. Required for salt-evoked neuronal activity and behavioral avoidance of high concentrations of NaCl. In Caenorhabditis elegans, this protein is Transmembrane channel-like protein 1 (tmc-1).